Consider the following 307-residue polypeptide: NAD kinase (307 aa).

Asp-80 functions as the Proton acceptor in the catalytic mechanism. Residues 80 to 81 (DG), His-85, 154 to 155 (ND), His-165, His-182, Asp-184, 195 to 200 (TAYALS), and Gln-254 contribute to the NAD(+) site.

The protein belongs to the NAD kinase family. A divalent metal cation is required as a cofactor.

It is found in the cytoplasm. The enzyme catalyses NAD(+) + ATP = ADP + NADP(+) + H(+). Involved in the regulation of the intracellular balance of NAD and NADP, and is a key enzyme in the biosynthesis of NADP. Catalyzes specifically the phosphorylation on 2'-hydroxyl of the adenosine moiety of NAD to yield NADP. The chain is NAD kinase from Acinetobacter baylyi (strain ATCC 33305 / BD413 / ADP1).